The sequence spans 167 residues: Ribosome maturation factor RimM (167 aa).

The PRC barrel domain occupies 94–166 (QNRAWLHELE…YIVVPRFDEF (73 aa)).

It belongs to the RimM family. As to quaternary structure, binds ribosomal protein uS19.

The protein resides in the cytoplasm. Its function is as follows. An accessory protein needed during the final step in the assembly of 30S ribosomal subunit, possibly for assembly of the head region. Essential for efficient processing of 16S rRNA. May be needed both before and after RbfA during the maturation of 16S rRNA. It has affinity for free ribosomal 30S subunits but not for 70S ribosomes. This Chlorobium phaeovibrioides (strain DSM 265 / 1930) (Prosthecochloris vibrioformis (strain DSM 265)) protein is Ribosome maturation factor RimM.